The chain runs to 118 residues: Thioredoxin AMT13 (118 aa).

Residues 1–110 (MSDNKAIQTL…LEDAIRANLG (110 aa)) form the Thioredoxin domain. A disulfide bridge connects residues cysteine 36 and cysteine 39.

The protein belongs to the thioredoxin family.

It functions in the pathway mycotoxin biosynthesis. In terms of biological role, thioredoxin; part of the gene clusters that mediate the biosynthesis of AM-toxins, host-selective toxins (HSTs) causing Alternaria blotch on apple, a worldwide distributed disease. AM-toxins are cyclic depsipeptides containing the 3 residues 2-hydroxy-isovaleric acid (2-HIV), dehydroalanine, L-alanine which are common for all 3 AM-toxins I to III. The fourth precursor is L-alpha-amino-methoxyphenyl-valeric acid (L-Amv) for AM-toxin I, L-alpha-amino-phenyl-valeric acid (L-Apv) for AM-toxin II, and L-alpha-amino-hydroxyphenyl-valeric acid (L-Ahv) for AM-toxin III. AM-toxins have two target sites for affecting susceptible apple cells; they cause invagination of the plasma membrane and electrolyte loss and chloroplast disorganization. The non-ribosomal peptide synthetase AMT1 contains 4 catalytic modules and is responsible for activation of each residue in AM-toxin. The aldo-keto reductase AMT2 catalyzes the conversion of 2-keto-isovaleric acid (2-KIV) to 2-hydroxy-isovaleric acid (2-HIV), one of the precursor residues incorporated by AMT1 during AM-toxin biosynthesis, by reduction of its ketone to an alcohol. The cytochrome P450 monooxygenase AMT3 and the thioesterase AMT4 are also important for AM-toxin production, but their exact function within the AM-toxin biosynthesis are not known yet. Up to 21 proteins (including AMT1 to AMT4) are predicted to be involved in AM-toxin biosynthesis since their expression ishighly up-regulated in AM-toxin-producing cultures. The protein is Thioredoxin AMT13 of Alternaria alternata (Alternaria rot fungus).